A 188-amino-acid polypeptide reads, in one-letter code: UPF0301 protein XF_2228 (188 aa).

Belongs to the UPF0301 (AlgH) family.

This is UPF0301 protein XF_2228 from Xylella fastidiosa (strain 9a5c).